We begin with the raw amino-acid sequence, 308 residues long: 1,4-dihydroxy-2-naphthoate octaprenyltransferase (308 aa).

Residues 1–20 lie on the Cytoplasmic side of the membrane; it reads MTEQQISRTQAWLESLRPKT. A helical membrane pass occupies residues 21–41; it reads LPLAFAAIIVGTALAWWQGHF. Residue aspartate 42 is a topological domain, periplasmic. Residues 43-63 traverse the membrane as a helical segment; the sequence is PLVALLALITAGLLQILSNLA. Over 64 to 97 the chain is Cytoplasmic; sequence NDYGDAVKGSDKPDRIGPLRGMQKGVITQQEMKR. A helical membrane pass occupies residues 98-118; the sequence is ALIITVVLICLSGLALVAVAC. The Periplasmic portion of the chain corresponds to 119 to 123; sequence HTLAD. A helical transmembrane segment spans residues 124–144; the sequence is FVGFLILGGLSIIAAITYTVG. Residues 145-148 lie on the Cytoplasmic side of the membrane; the sequence is NRPY. Residues 149–169 traverse the membrane as a helical segment; that stretch reads GYIGLGDISVLVFFGWLSVMG. At 170–176 the chain is on the periplasmic side; it reads SWYLQAH. The helical transmembrane segment at 177–197 threads the bilayer; sequence TLIPALILPATACGLLATAVL. At 198 to 227 the chain is on the cytoplasmic side; that stretch reads NINNLRDINSDRENGKNTLVVRLGEVNARR. Residues 228-247 traverse the membrane as a helical segment; the sequence is YHACLLMGSLVCLALFNLFS. The Periplasmic segment spans residues 248–250; it reads LHS. The chain crosses the membrane as a helical span at residues 251-270; the sequence is LWGWLFLLAAPLLVKQARYV. Over 271–286 the chain is Cytoplasmic; it reads MREMDPVAMRPMLERT. The chain crosses the membrane as a helical span at residues 287–307; that stretch reads VKGALLTNLLFVLGIFLSQWA. Residue alanine 308 is a topological domain, periplasmic.

It belongs to the MenA family. Type 1 subfamily.

The protein resides in the cell inner membrane. The enzyme catalyses an all-trans-polyprenyl diphosphate + 1,4-dihydroxy-2-naphthoate + H(+) = a 2-demethylmenaquinol + CO2 + diphosphate. The protein operates within quinol/quinone metabolism; menaquinone biosynthesis; menaquinol from 1,4-dihydroxy-2-naphthoate: step 1/2. In terms of biological role, conversion of 1,4-dihydroxy-2-naphthoate (DHNA) to demethylmenaquinone (DMK). Attaches octaprenylpyrophosphate, a membrane-bound 40-carbon side chain to DHNA. The conversion of DHNA to DMK proceeds in three stages: the removal of the carboxyl group of DHNA as CO(2), the attachment of the isoprenoid side chain, and a quinol-to-quinone oxidation, which is thought to be spontaneous. The sequence is that of 1,4-dihydroxy-2-naphthoate octaprenyltransferase from Escherichia coli (strain K12).